We begin with the raw amino-acid sequence, 486 residues long: Ribulose bisphosphate carboxylase large chain (486 aa).

Positions 126 and 176 each coordinate substrate. Lysine 178 serves as the catalytic Proton acceptor. Substrate is bound at residue lysine 180. Mg(2+) contacts are provided by lysine 204, aspartate 206, and glutamate 207. Lysine 204 carries the N6-carboxylysine modification. Histidine 296 acts as the Proton acceptor in catalysis. Arginine 297, histidine 329, and serine 381 together coordinate substrate.

The protein belongs to the RuBisCO large chain family. Type I subfamily. As to quaternary structure, heterohexadecamer of 8 large chains and 8 small chains. Requires Mg(2+) as cofactor.

The catalysed reaction is 2 (2R)-3-phosphoglycerate + 2 H(+) = D-ribulose 1,5-bisphosphate + CO2 + H2O. It carries out the reaction D-ribulose 1,5-bisphosphate + O2 = 2-phosphoglycolate + (2R)-3-phosphoglycerate + 2 H(+). RuBisCO catalyzes two reactions: the carboxylation of D-ribulose 1,5-bisphosphate, the primary event in carbon dioxide fixation, as well as the oxidative fragmentation of the pentose substrate. Both reactions occur simultaneously and in competition at the same active site. In Sinorhizobium medicae (strain WSM419) (Ensifer medicae), this protein is Ribulose bisphosphate carboxylase large chain.